The chain runs to 373 residues: Envelope glycoprotein C homolog (373 aa).

The N-terminal stretch at 1–25 is a signal peptide; the sequence is MVSNMRSTRTALTGWVGIFLVLSLQ. Residues 58-93 form a disordered region; sequence EVPNSPTTELSTTVATKTAVPTTESTSSSEAHRNSS. Over residues 59–68 the composition is skewed to polar residues; the sequence is VPNSPTTELS. The span at 69-80 shows a compositional bias: low complexity; the sequence is TTVATKTAVPTT. Asn91, Asn111, Asn203, and Asn345 each carry an N-linked (GlcNAc...) asparagine; by host glycan. Positions 249 to 347 constitute an Ig-like domain; the sequence is PASVDVLAPP…GDMISTSNAT (99 aa).

It belongs to the herpesviridae glycoprotein C family.

In Gallus gallus (Chicken), this protein is Envelope glycoprotein C homolog (gC).